Consider the following 229-residue polypeptide: 7-cyano-7-deazaguanine synthase (229 aa).

Residue 8–18 (FSGGQDSTTCL) participates in ATP binding. Positions 186, 195, 198, and 201 each coordinate Zn(2+).

This sequence belongs to the QueC family. Zn(2+) serves as cofactor.

The catalysed reaction is 7-carboxy-7-deazaguanine + NH4(+) + ATP = 7-cyano-7-deazaguanine + ADP + phosphate + H2O + H(+). Its pathway is purine metabolism; 7-cyano-7-deazaguanine biosynthesis. In terms of biological role, catalyzes the ATP-dependent conversion of 7-carboxy-7-deazaguanine (CDG) to 7-cyano-7-deazaguanine (preQ(0)). The protein is 7-cyano-7-deazaguanine synthase of Edwardsiella ictaluri (strain 93-146).